The primary structure comprises 253 residues: Fatty acid elongase 5 (253 aa).

A run of 7 helical transmembrane segments spans residues 24–44, 60–80, 100–120, 127–147, 150–170, 188–208, and 214–234; these read IFVS…LVII, IMMI…ISLA, FWIF…VLMI, QLSF…GLLL, GIGN…HFLM, ILTK…SLAP, and FALQ…ILFL. A HxxHH motif motif is present at residues 132–136; it reads HIYHH. The active-site Nucleophile is the H135.

It belongs to the ELO family.

Its subcellular location is the membrane. It carries out the reaction an acyl-CoA + malonyl-CoA + H(+) = a 3-oxoacyl-CoA + CO2 + CoA. It participates in lipid metabolism; polyunsaturated fatty acid biosynthesis. In terms of biological role, involved in the synthesis of fatty acids. Elongates C20 polyunsaturated fatty acids (PUFAs) with a preference for n-6 PUFAs. The sequence is that of Fatty acid elongase 5 from Trypanosoma cruzi (strain CL Brener).